The sequence spans 485 residues: Probable cobyric acid synthase (485 aa).

Residues 250-435 (EIEVAVIRLP…LHGLFDNRNI (186 aa)) form the GATase cobBQ-type domain. The active-site Nucleophile is Cys328. His427 is a catalytic residue.

It belongs to the CobB/CobQ family. CobQ subfamily.

The protein operates within cofactor biosynthesis; adenosylcobalamin biosynthesis. Functionally, catalyzes amidations at positions B, D, E, and G on adenosylcobyrinic A,C-diamide. NH(2) groups are provided by glutamine, and one molecule of ATP is hydrogenolyzed for each amidation. The sequence is that of Probable cobyric acid synthase from Methanosarcina mazei (strain ATCC BAA-159 / DSM 3647 / Goe1 / Go1 / JCM 11833 / OCM 88) (Methanosarcina frisia).